The sequence spans 413 residues: Cell division protein FtsZ 2 (413 aa).

Residues 130-132, Glu169, Arg173, and Asp216 contribute to the GTP site; that span reads GTG.

It belongs to the FtsZ family. Homodimer. Polymerizes to form a dynamic ring structure in a strictly GTP-dependent manner. Interacts directly with several other division proteins.

The protein resides in the cytoplasm. Essential cell division protein that forms a contractile ring structure (Z ring) at the future cell division site. The regulation of the ring assembly controls the timing and the location of cell division. One of the functions of the FtsZ ring is to recruit other cell division proteins to the septum to produce a new cell wall between the dividing cells. Binds GTP and shows GTPase activity. In Pyrococcus abyssi (strain GE5 / Orsay), this protein is Cell division protein FtsZ 2.